A 146-amino-acid chain; its full sequence is Cyanate hydratase (146 aa).

Residues arginine 87, glutamate 90, and serine 113 contribute to the active site.

This sequence belongs to the cyanase family.

The catalysed reaction is cyanate + hydrogencarbonate + 3 H(+) = NH4(+) + 2 CO2. Catalyzes the reaction of cyanate with bicarbonate to produce ammonia and carbon dioxide. In Nostoc sp. (strain PCC 7120 / SAG 25.82 / UTEX 2576), this protein is Cyanate hydratase.